Here is a 314-residue protein sequence, read N- to C-terminus: Coiled-coil domain-containing protein 42 like-2 (314 aa).

Coiled-coil stretches lie at residues 34–133 (RLLE…KGTL) and 175–231 (NKLL…FQWE).

Belongs to the CFAP73 family.

This is Coiled-coil domain-containing protein 42 like-2 from Xenopus tropicalis (Western clawed frog).